We begin with the raw amino-acid sequence, 61 residues long: Small ribosomal subunit protein uS14 (61 aa).

4 residues coordinate Zn(2+): Cys-24, Cys-27, Cys-40, and Cys-43.

It belongs to the universal ribosomal protein uS14 family. Zinc-binding uS14 subfamily. Part of the 30S ribosomal subunit. Contacts proteins S3 and S10. The cofactor is Zn(2+).

Its function is as follows. Binds 16S rRNA, required for the assembly of 30S particles and may also be responsible for determining the conformation of the 16S rRNA at the A site. This is Small ribosomal subunit protein uS14 from Maridesulfovibrio salexigens (strain ATCC 14822 / DSM 2638 / NCIMB 8403 / VKM B-1763) (Desulfovibrio salexigens).